The sequence spans 182 residues: Fucoxanthin-chlorophyll a-c binding protein D, chloroplastic (182 aa).

A chloroplast-targeting transit peptide spans 1 to 4 (AMKM). 3 consecutive transmembrane segments (helical) span residues 46–66 (IAML…PGML), 87–107 (IPPG…LAVM), and 148–168 (GRAA…NNKP).

This sequence belongs to the fucoxanthin chlorophyll protein family. As to quaternary structure, the LHC complex of chromophytic algae is composed of fucoxanthin, chlorophyll A and C bound non-covalently by fucoxanthin chlorophyll proteins (FCPs). The ratio of pigments in this LHC is; fucoxanthin: chlorophyll C: chlorophyll A; (0.6-1): (0.1-0.3): (1).

Its subcellular location is the plastid. The protein localises to the chloroplast thylakoid membrane. Functionally, the light-harvesting complex (LHC) functions as a light receptor, it captures and delivers excitation energy to photosystems with which it is closely associated. Energy is transferred from the carotenoid and chlorophyll C (or B) to chlorophyll A and the photosynthetic reaction centers where it is used to synthesize ATP and reducing power. This chain is Fucoxanthin-chlorophyll a-c binding protein D, chloroplastic (FCPD), found in Macrocystis pyrifera (Giant kelp).